Consider the following 247-residue polypeptide: Fibroblast growth factor 14 (247 aa).

Disordered regions lie at residues 1–38 and 214–247; these read MAAA…KNRG and VGET…SKTT. The span at 15-25 shows a compositional bias: basic and acidic residues; sequence QAREQHWDRPS.

This sequence belongs to the heparin-binding growth factors family. Interacts with SCN8A. Nervous system.

It is found in the nucleus. Functionally, probably involved in nervous system development and function. The polypeptide is Fibroblast growth factor 14 (FGF14) (Homo sapiens (Human)).